We begin with the raw amino-acid sequence, 274 residues long: Membrane protein insertase YidC 2 (274 aa).

Positions 1–20 (MKKKLKLTSLLGLSLLIMTA) are cleaved as a signal peptide. Residue Cys21 is the site of N-palmitoyl cysteine attachment. Cys21 carries the S-diacylglycerol cysteine lipid modification. 4 helical membrane passes run 56–76 (ISIG…LLPV), 128–148 (SDSL…FQAL), 167–187 (VDTT…STWL), and 205–225 (GIPV…ALYW).

Belongs to the OXA1/ALB3/YidC family. Type 2 subfamily.

The protein localises to the cell membrane. In terms of biological role, required for the insertion and/or proper folding and/or complex formation of integral membrane proteins into the membrane. Involved in integration of membrane proteins that insert both dependently and independently of the Sec translocase complex, as well as at least some lipoproteins. This chain is Membrane protein insertase YidC 2, found in Streptococcus pneumoniae serotype 4 (strain ATCC BAA-334 / TIGR4).